Reading from the N-terminus, the 333-residue chain is Lipoyl synthase (333 aa).

7 residues coordinate [4Fe-4S] cluster: C55, C60, C66, C81, C85, C88, and S292. Residues 67–281 (WEDREATFLI…SAEAERLGFA (215 aa)) form the Radical SAM core domain.

The protein belongs to the radical SAM superfamily. Lipoyl synthase family. [4Fe-4S] cluster serves as cofactor.

The protein resides in the cytoplasm. It catalyses the reaction [[Fe-S] cluster scaffold protein carrying a second [4Fe-4S](2+) cluster] + N(6)-octanoyl-L-lysyl-[protein] + 2 oxidized [2Fe-2S]-[ferredoxin] + 2 S-adenosyl-L-methionine + 4 H(+) = [[Fe-S] cluster scaffold protein] + N(6)-[(R)-dihydrolipoyl]-L-lysyl-[protein] + 4 Fe(3+) + 2 hydrogen sulfide + 2 5'-deoxyadenosine + 2 L-methionine + 2 reduced [2Fe-2S]-[ferredoxin]. Its pathway is protein modification; protein lipoylation via endogenous pathway; protein N(6)-(lipoyl)lysine from octanoyl-[acyl-carrier-protein]: step 2/2. Catalyzes the radical-mediated insertion of two sulfur atoms into the C-6 and C-8 positions of the octanoyl moiety bound to the lipoyl domains of lipoate-dependent enzymes, thereby converting the octanoylated domains into lipoylated derivatives. In Kineococcus radiotolerans (strain ATCC BAA-149 / DSM 14245 / SRS30216), this protein is Lipoyl synthase.